A 497-amino-acid chain; its full sequence is Carboxylesterase (497 aa).

Ser185 serves as the catalytic Acyl-ester intermediate. Active-site charge relay system residues include Glu319 and His415.

Belongs to the type-B carboxylesterase/lipase family.

It is found in the secreted. It carries out the reaction a carboxylic ester + H2O = an alcohol + a carboxylate + H(+). This Thermobifida fusca (strain YX) protein is Carboxylesterase.